The following is a 491-amino-acid chain: GTPase Der (491 aa).

2 EngA-type G domains span residues 54–217 and 229–402; these read PVLA…PEYS and RRIA…ESWD. Residues 60–67, 107–111, 169–172, 235–242, 282–286, and 347–350 contribute to the GTP site; these read GRPNVGKS, DTGGW, NKVD, DTAGI, and NKWD. Residues 403-485 enclose the KH-like domain; sequence RRIPTGRLNA…PIEVNMRVRE (83 aa).

The protein belongs to the TRAFAC class TrmE-Era-EngA-EngB-Septin-like GTPase superfamily. EngA (Der) GTPase family. In terms of assembly, associates with the 50S ribosomal subunit.

Its function is as follows. GTPase that plays an essential role in the late steps of ribosome biogenesis. The sequence is that of GTPase Der from Paenarthrobacter aurescens (strain TC1).